Consider the following 231-residue polypeptide: 2-phospho-L-lactate guanylyltransferase (231 aa).

It belongs to the CofC family. As to quaternary structure, homodimer.

The enzyme catalyses (2S)-2-phospholactate + GTP + H(+) = (2S)-lactyl-2-diphospho-5'-guanosine + diphosphate. The protein operates within cofactor biosynthesis; coenzyme F420 biosynthesis. In terms of biological role, guanylyltransferase that catalyzes the activation of (2S)-2-phospholactate (2-PL) as (2S)-lactyl-2-diphospho-5'-guanosine, via the condensation of 2-PL with GTP. It is involved in the biosynthesis of coenzyme F420, a hydride carrier cofactor. This Haloterrigena turkmenica (strain ATCC 51198 / DSM 5511 / JCM 9101 / NCIMB 13204 / VKM B-1734 / 4k) (Halococcus turkmenicus) protein is 2-phospho-L-lactate guanylyltransferase.